The primary structure comprises 279 residues: Virginiamycin B lyase (279 aa).

His215 provides a ligand contact to substrate. Glu253 lines the Mg(2+) pocket. The Proton acceptor role is filled by His255. Glu270 serves as a coordination point for Mg(2+).

This sequence belongs to the Vgb family. As to quaternary structure, monomer. Requires Mg(2+) as cofactor.

Inactivates the type B streptogramin antibiotics by linearizing the lactone ring at the ester linkage, generating a free phenylglycine carboxylate and converting the threonyl moiety into 2-amino-butenoic acid. The polypeptide is Virginiamycin B lyase (Nocardia farcinica (strain IFM 10152)).